A 395-amino-acid chain; its full sequence is MPWSSRGALLRDLVLGVLGTAAFLLDLGTDLWAAVQYALGGRYLWAALVLALLGLASVALQLFSWLWLRADPAGLHGSQPPRRCLALLHLLQLGYLYRCVQELRQGLLVWQQEEPSEFDLAYADFLALDISMLRLFETFLETAPQLTLVLAIMLQSGRAEYYQWVGICTSFLGISWALLDYHRALRTCLPSRPLLGLGSSVIYFLWNLLLLWPRVLAVALFSALFPSYVALHFLGLWLVLLLWVWLQGTDFMPDPSSEWLYQVTVATILYFSWFNVAEGRTRGRAIIHFAFLLSDSILLVATWVTHSSWLPSGIPLQLWLPVGCGCFFLGLALRLVYYHWLHPSCCWKPDPDQVDGARSLLSPEGYQLPQNRRMTHLAQNFFPKAKDEAALPVKG.

Residues 1-12 are Cytoplasmic-facing; the sequence is MPWSSRGALLRD. The chain crosses the membrane as a helical span at residues 13–33; that stretch reads LVLGVLGTAAFLLDLGTDLWA. Topologically, residues 34-47 are extracellular; the sequence is AVQYALGGRYLWAA. The helical transmembrane segment at 48 to 68 threads the bilayer; sequence LVLALLGLASVALQLFSWLWL. The Cytoplasmic segment spans residues 69 to 158; that stretch reads RADPAGLHGS…VLAIMLQSGR (90 aa). Residues 159-179 form a helical membrane-spanning segment; it reads AEYYQWVGICTSFLGISWALL. Topologically, residues 180 to 200 are extracellular; the sequence is DYHRALRTCLPSRPLLGLGSS. A helical membrane pass occupies residues 201-221; it reads VIYFLWNLLLLWPRVLAVALF. Topologically, residues 222–223 are cytoplasmic; the sequence is SA. The chain crosses the membrane as a helical span at residues 224-244; it reads LFPSYVALHFLGLWLVLLLWV. Residues 245-258 lie on the Extracellular side of the membrane; sequence WLQGTDFMPDPSSE. The helical transmembrane segment at 259-279 threads the bilayer; sequence WLYQVTVATILYFSWFNVAEG. The Cytoplasmic portion of the chain corresponds to 280-284; that stretch reads RTRGR. A helical membrane pass occupies residues 285-305; it reads AIIHFAFLLSDSILLVATWVT. The Extracellular portion of the chain corresponds to 306–312; the sequence is HSSWLPS. Residues 313–333 traverse the membrane as a helical segment; sequence GIPLQLWLPVGCGCFFLGLAL. Topologically, residues 334 to 395 are cytoplasmic; sequence RLVYYHWLHP…KDEAALPVKG (62 aa). Position 362 is a phosphoserine (Ser-362). Residue Thr-375 is modified to Phosphothreonine.

Belongs to the XK family. Interacts with BSG and NPTN; which act as chaperones to localize XKR8 at the cell membrane. As to quaternary structure, homodimer. In terms of processing, undergoes proteolytic processing by caspase-3 (CASP3), leading to its activation. Phosphorylation at Thr-375 activates the phospholipid scramblase activity.

It is found in the cell membrane. Its subcellular location is the cytoplasm. The protein resides in the perinuclear region. The catalysed reaction is a 1,2-diacyl-sn-glycero-3-phospho-L-serine(in) = a 1,2-diacyl-sn-glycero-3-phospho-L-serine(out). Activated upon caspase cleavage to generate the XK-related protein 8, processed form. Does not act prior the onset of apoptosis. Phospholipid scramblase that promotes phosphatidylserine exposure on apoptotic cell surface. Phosphatidylserine is a specific marker only present at the surface of apoptotic cells and acts as a specific signal for engulfment. Required for the clearance of apoptotic cells, such as engulfment of apoptotic germ cells by Sertoli cells, clearance of senescent neutrophils or regulation of bipolar cell numbers in the retina. Has no effect on calcium-induced exposure of phosphatidylserine. Promotes myoblast differentiation and survival. The polypeptide is XK-related protein 8 (Pan troglodytes (Chimpanzee)).